A 271-amino-acid polypeptide reads, in one-letter code: Ribonuclease HII (271 aa).

Residues 84 to 271 (VLIAGVDEVG…HRMSFLSNYI (188 aa)) form the RNase H type-2 domain. Asp90, Glu91, and Asp187 together coordinate a divalent metal cation.

Belongs to the RNase HII family. Mn(2+) is required as a cofactor. Requires Mg(2+) as cofactor.

The protein localises to the cytoplasm. It carries out the reaction Endonucleolytic cleavage to 5'-phosphomonoester.. Endonuclease that specifically degrades the RNA of RNA-DNA hybrids. In Clostridium tetani (strain Massachusetts / E88), this protein is Ribonuclease HII.